A 389-amino-acid polypeptide reads, in one-letter code: Succinate--CoA ligase [ADP-forming] subunit beta (389 aa).

The 228-residue stretch at 9 to 236 (RDLFEAHGVP…ERTEDPLEAK (228 aa)) folds into the ATP-grasp domain. Residues Lys45, 52–54 (GRG), Ala94, and Glu99 contribute to the ATP site. Asn191 and Asp205 together coordinate Mg(2+). Residues Asn256 and 318 to 320 (GIT) contribute to the substrate site.

This sequence belongs to the succinate/malate CoA ligase beta subunit family. As to quaternary structure, heterotetramer of two alpha and two beta subunits. Mg(2+) is required as a cofactor.

The catalysed reaction is succinate + ATP + CoA = succinyl-CoA + ADP + phosphate. The enzyme catalyses GTP + succinate + CoA = succinyl-CoA + GDP + phosphate. The protein operates within carbohydrate metabolism; tricarboxylic acid cycle; succinate from succinyl-CoA (ligase route): step 1/1. Its function is as follows. Succinyl-CoA synthetase functions in the citric acid cycle (TCA), coupling the hydrolysis of succinyl-CoA to the synthesis of either ATP or GTP and thus represents the only step of substrate-level phosphorylation in the TCA. The beta subunit provides nucleotide specificity of the enzyme and binds the substrate succinate, while the binding sites for coenzyme A and phosphate are found in the alpha subunit. The sequence is that of Succinate--CoA ligase [ADP-forming] subunit beta from Micrococcus luteus (strain ATCC 4698 / DSM 20030 / JCM 1464 / CCM 169 / CCUG 5858 / IAM 1056 / NBRC 3333 / NCIMB 9278 / NCTC 2665 / VKM Ac-2230) (Micrococcus lysodeikticus).